Reading from the N-terminus, the 258-residue chain is uncharacterized protein (258 aa).

The next 7 membrane-spanning stretches (helical) occupy residues 8–28, 38–58, 70–90, 121–141, 176–196, 204–224, and 231–251; these read VFLALSGAIAFLLPIGLIVWF, VFFIGALTFFVFAQLLEGGVH, EAMQHPLWYGIYGCLMAGIFE, LEAILITGLSSISLIVYAFAI, LGGIERISAIAVQIGLSLLVL, PLFLLYSILLHALFNVPAVLY, and HAAAVEIIVALIAALSVYWIV.

The protein localises to the cell membrane. This is an uncharacterized protein from Bacillus subtilis (strain 168).